A 307-amino-acid chain; its full sequence is GTPase Era (307 aa).

The Era-type G domain occupies 7–181; that stretch reads RCGWVALLGP…VKLVKSKLPV (175 aa). Residues 15–22 are G1; the sequence is GPPNAGKS. GTP is bound at residue 15–22; sequence GPPNAGKS. Residues 41–45 are G2; that stretch reads QTTRN. Positions 62–65 are G3; it reads DTPG. Residues 62–66 and 130–133 contribute to the GTP site; these read DTPGI and NKVD. Residues 130–133 form a G4 region; the sequence is NKVD. Residues 160–162 are G5; that stretch reads VSA. One can recognise a KH type-2 domain in the interval 212-290; that stretch reads LRQELPYSVA…HLELWVKVRE (79 aa).

The protein belongs to the TRAFAC class TrmE-Era-EngA-EngB-Septin-like GTPase superfamily. Era GTPase family. As to quaternary structure, monomer.

Its subcellular location is the cytoplasm. The protein localises to the cell inner membrane. Functionally, an essential GTPase that binds both GDP and GTP, with rapid nucleotide exchange. Plays a role in 16S rRNA processing and 30S ribosomal subunit biogenesis and possibly also in cell cycle regulation and energy metabolism. The polypeptide is GTPase Era (Nitratidesulfovibrio vulgaris (strain DSM 19637 / Miyazaki F) (Desulfovibrio vulgaris)).